Consider the following 585-residue polypeptide: NADP-reducing hydrogenase subunit HndD (585 aa).

In terms of domain architecture, 2Fe-2S ferredoxin-type spans 2–85 (SMLTITIDGK…NMVVKTNSLR (84 aa)). The [2Fe-2S] cluster site is built by C36, C52, C55, and C69. The 4Fe-4S His(Cys)3-ligated-type domain maps to 85–124 (RVLNARRTVLELLLSDHPKDCLVCAKSGECELQTLAERFG). [4Fe-4S] cluster contacts are provided by H101, C105, C108, and C114. 4Fe-4S ferredoxin-type domains are found at residues 144 to 174 (ASIIRDMDKCIMCRRCETMCNTVQTCGVLSG) and 185 to 216 (PAFEMNLADTVCTNCGQCVAVCPTGALVEHEY).

In terms of assembly, heterotetramer composed of HndA, HndB, HndC and HndD subunits. HndD is probably the hydrogenase subunit. [4Fe-4S] cluster serves as cofactor.

The enzyme catalyses H2 + NADP(+) = NADPH + H(+). With respect to regulation, inhibited by oxygen. Its function is as follows. Catalyzes the reduction of NADP in the presence of molecular H(2) to yield NADPH. The protein is NADP-reducing hydrogenase subunit HndD (hndD) of Solidesulfovibrio fructosivorans (Desulfovibrio fructosivorans).